Consider the following 1178-residue polypeptide: DNA-directed RNA polymerase subunit beta' (1178 aa).

Positions 60, 62, 75, and 78 each coordinate Zn(2+). The Mg(2+) site is built by aspartate 450, aspartate 452, and aspartate 454. The Zn(2+) site is built by cysteine 795, cysteine 869, cysteine 876, and cysteine 879.

It belongs to the RNA polymerase beta' chain family. As to quaternary structure, the RNAP catalytic core consists of 2 alpha, 1 beta, 1 beta' and 1 omega subunit. When a sigma factor is associated with the core the holoenzyme is formed, which can initiate transcription. The cofactor is Mg(2+). Zn(2+) serves as cofactor.

It catalyses the reaction RNA(n) + a ribonucleoside 5'-triphosphate = RNA(n+1) + diphosphate. DNA-dependent RNA polymerase catalyzes the transcription of DNA into RNA using the four ribonucleoside triphosphates as substrates. The protein is DNA-directed RNA polymerase subunit beta' of Clostridium botulinum (strain Langeland / NCTC 10281 / Type F).